A 174-amino-acid polypeptide reads, in one-letter code: SUSHI domain-containing protein E3 (174 aa).

The N-terminal stretch at 1-20 (MATEVQFACALVVLLGCGYA) is a signal peptide. A Sushi domain is found at 35-97 (QNCTTYPSIE…WTNGPPSCVK (63 aa)). Cystine bridges form between Cys-37/Cys-78 and Cys-64/Cys-95. Residues 108-127 (STSTTPVTTGTFPDPQNTTH) are compositionally biased toward low complexity. The disordered stretch occupies residues 108–133 (STSTTPVTTGTFPDPQNTTHPTHHTV). Residues 145–165 (FGYTPWAIITLVVIILLVVWI) form a helical membrane-spanning segment.

The protein resides in the host membrane. This chain is SUSHI domain-containing protein E3 (E3), found in Equine herpesvirus 2 (strain 86/87) (EHV-2).